Reading from the N-terminus, the 898-residue chain is Alanine--tRNA ligase (898 aa).

Residues His582, His586, Cys685, and His689 each coordinate Zn(2+).

This sequence belongs to the class-II aminoacyl-tRNA synthetase family. Requires Zn(2+) as cofactor.

The protein localises to the cytoplasm. It catalyses the reaction tRNA(Ala) + L-alanine + ATP = L-alanyl-tRNA(Ala) + AMP + diphosphate. In terms of biological role, catalyzes the attachment of alanine to tRNA(Ala) in a two-step reaction: alanine is first activated by ATP to form Ala-AMP and then transferred to the acceptor end of tRNA(Ala). Also edits incorrectly charged Ser-tRNA(Ala) and Gly-tRNA(Ala) via its editing domain. The protein is Alanine--tRNA ligase of Mycolicibacterium gilvum (strain PYR-GCK) (Mycobacterium gilvum (strain PYR-GCK)).